The following is a 299-amino-acid chain: Tetrahydromethanopterin S-methyltransferase subunit E (299 aa).

6 helical membrane-spanning segments follow: residues 57–77, 80–100, 133–153, 158–178, 237–257, and 261–281; these read AISG…SVAW, INAG…AAIV, IGPI…AAYL, LGNP…VGAI, GLCF…GNII, and LVTK…AAMI.

This sequence belongs to the MtrE family. The complex is composed of 8 subunits; MtrA, MtrB, MtrC, MtrD, MtrE, MtrF, MtrG and MtrH.

Its subcellular location is the cell membrane. It catalyses the reaction 5-methyl-5,6,7,8-tetrahydromethanopterin + coenzyme M + 2 Na(+)(in) = 5,6,7,8-tetrahydromethanopterin + methyl-coenzyme M + 2 Na(+)(out). It participates in one-carbon metabolism; methanogenesis from CO(2); methyl-coenzyme M from 5,10-methylene-5,6,7,8-tetrahydromethanopterin: step 2/2. Its function is as follows. Part of a complex that catalyzes the formation of methyl-coenzyme M and tetrahydromethanopterin from coenzyme M and methyl-tetrahydromethanopterin. This is an energy-conserving, sodium-ion translocating step. The polypeptide is Tetrahydromethanopterin S-methyltransferase subunit E (Methanococcus vannielii (strain ATCC 35089 / DSM 1224 / JCM 13029 / OCM 148 / SB)).